Here is an 85-residue protein sequence, read N- to C-terminus: Acylphosphatase (85 aa).

One can recognise an Acylphosphatase-like domain in the interval 3–85 (AARFVVSGVV…PARFRRLKTL (83 aa)). Residues R18 and N36 contribute to the active site. Residues 66–85 (PPRSRRSRARPARFRRLKTL) form a disordered region.

It belongs to the acylphosphatase family.

The catalysed reaction is an acyl phosphate + H2O = a carboxylate + phosphate + H(+). The protein is Acylphosphatase (acyP) of Xanthomonas axonopodis pv. citri (strain 306).